The primary structure comprises 347 residues: FMRFamide-related peptides (347 aa).

A signal peptide spans 1–22 (MGIALMFLLALYQMQSAIHSEI). Residues 23–102 (IDTPNYAGNS…RYKYDPELEA (80 aa)) constitute a propeptide that is removed on maturation. Phe-114 carries the phenylalanine amide modification. Residue Tyr-146 is modified to Tyrosine amide. Phenylalanine amide occurs at positions 157, 168, 179, 190, 201, 212, 223, and 232. The propeptide occupies 235-240 (SPHEEL). Phenylalanine amide is present on residues Phe-250 and Phe-259. Ser-270 carries the serine amide modification. Phe-280 is modified (phenylalanine amide). The propeptide occupies 283–347 (SLKPAAPESK…SVEQDQFFGQ (65 aa)). Residues 283–347 (SLKPAAPESK…SVEQDQFFGQ (65 aa)) are disordered. Residues 305–320 (SPVDKAMTELFKKQEL) show a composition bias toward basic and acidic residues. The span at 321–347 (QDQQVKNGAQATTTQDGSVEQDQFFGQ) shows a compositional bias: polar residues.

It belongs to the FARP (FMRFamide related peptide) family. This precursor includes 13 peptides that have FMRF or related sequences at their C-termini, and other putative neuropeptides.

The protein resides in the secreted. In insects, FMRFamide and related peptides have modulatory actions at skeletal neuromuscular junctions, and peptides that are immunologically related to FMRFamide are released into the circulation from neurohemal organs. This Drosophila melanogaster (Fruit fly) protein is FMRFamide-related peptides.